The chain runs to 550 residues: Glucose-6-phosphate isomerase (550 aa).

Glu356 acts as the Proton donor in catalysis. Catalysis depends on residues His387 and Lys515.

This sequence belongs to the GPI family.

Its subcellular location is the cytoplasm. The catalysed reaction is alpha-D-glucose 6-phosphate = beta-D-fructose 6-phosphate. It participates in carbohydrate biosynthesis; gluconeogenesis. Its pathway is carbohydrate degradation; glycolysis; D-glyceraldehyde 3-phosphate and glycerone phosphate from D-glucose: step 2/4. Its function is as follows. Catalyzes the reversible isomerization of glucose-6-phosphate to fructose-6-phosphate. The protein is Glucose-6-phosphate isomerase of Vibrio cholerae serotype O1 (strain ATCC 39315 / El Tor Inaba N16961).